A 132-amino-acid polypeptide reads, in one-letter code: Replication enhancer protein (132 aa).

It belongs to the geminiviridae replication enhancer protein family. Homooligomer. Interacts with the replication-associated protein (REP). Interacts with host proliferating cell nuclear antigen (PCNA). Interacts with host retinoblastoma-related protein 1 (RBR1), and may thereby deregulate the host cell cycle. Oligomerization and interaction with PCNA are necessary for optimal replication enhancement.

Functionally, increases viral DNA accumulation. Enhances infectivity and symptom expression. This Cabbage leaf curl virus (isolate Jamaica) (CaLCuV) protein is Replication enhancer protein.